The following is a 526-amino-acid chain: MSYPQEVNKRRTFAIISHPDAGKTTITEKVLLYGNAIQTAGSVKGKGSSAHAKSDWMEMEKQRGISITTSVMQFPYNNCLVNLLDTPGHEDFSEDTYRTLTAVDSCLMVIDSAKGVEERTIKLMEVTRLRDTPILTFMNKLDRDIRDPMELLDEVESVLKIRCAPITWPIGCGKLFKGVYHIAKDETYLYQSGQGSTIQEVRIVKGLSSPELDAAVGDDLANQLREELELVQGASNEFDHEAFINGELTPVFFGTALGNFGVDHFLDGLTEWAPKPQARQTDVRTVESSEEKFSGFVFKIQANMDPKHRDRVAFMRVVSGKYEKGMKLKHVRIGKDVVISDALTFMAGDRSHAEEAYAGDIIGLHNHGTIQIGDTFTQGEVMKFTGIPNFAPELFRRIRLKDPLKQKQLLKGLVQLSEEGAVQVFRPLMNNDLIVGAVGVLQFDVVVSRLKTEYNVEAIYEAVNVATARWVECCDAKKFEEFKRKNEQNLALDGGDNLTYIAPTMVNLNLAQERYPDINFFKTREH.

A tr-type G domain is found at 8–277 (NKRRTFAIIS…GLTEWAPKPQ (270 aa)). GTP contacts are provided by residues 17 to 24 (SHPDAGKT), 85 to 89 (DTPGH), and 139 to 142 (NKLD).

Belongs to the TRAFAC class translation factor GTPase superfamily. Classic translation factor GTPase family. PrfC subfamily.

Its subcellular location is the cytoplasm. In terms of biological role, increases the formation of ribosomal termination complexes and stimulates activities of RF-1 and RF-2. It binds guanine nucleotides and has strong preference for UGA stop codons. It may interact directly with the ribosome. The stimulation of RF-1 and RF-2 is significantly reduced by GTP and GDP, but not by GMP. This chain is Peptide chain release factor 3, found in Actinobacillus pleuropneumoniae serotype 7 (strain AP76).